An 87-amino-acid chain; its full sequence is Cell division topological specificity factor (87 aa).

This sequence belongs to the MinE family.

Its function is as follows. Prevents the cell division inhibition by proteins MinC and MinD at internal division sites while permitting inhibition at polar sites. This ensures cell division at the proper site by restricting the formation of a division septum at the midpoint of the long axis of the cell. The protein is Cell division topological specificity factor of Vibrio vulnificus (strain CMCP6).